Consider the following 135-residue polypeptide: Protein cornichon homolog 1 (135 aa).

The next 3 helical transmembrane spans lie at 2–22 (VFVWLTAFFLVVALIVLVIYQ), 51–71 (FVLQAALSVLFLLSGHWAMFL), and 111–131 (IVGLIILLFLSLFWMIWTVLL).

The protein belongs to the cornichon family. Interacts with HKT1;3.

The protein resides in the endoplasmic reticulum membrane. Its subcellular location is the golgi apparatus membrane. Functionally, acts as a cargo receptor necessary for the transportation of the cation transporter HKT1;3 and possibly other secretory proteins from the endoplasmic reticulum (ER) in COPII-coated vesicles targeted to the Golgi apparatus. The chain is Protein cornichon homolog 1 from Oryza sativa subsp. japonica (Rice).